The chain runs to 395 residues: Tryptophan--tRNA ligase, cytoplasmic (395 aa).

Positions 91–100 (PSSDSMHLGH) match the 'HIGH' region motif. A 'KMSKS' region motif is present at residues 275–279 (KMSAS). Phosphothreonine occurs at positions 288 and 290.

It belongs to the class-I aminoacyl-tRNA synthetase family.

It localises to the cytoplasm. The enzyme catalyses tRNA(Trp) + L-tryptophan + ATP = L-tryptophyl-tRNA(Trp) + AMP + diphosphate + H(+). This chain is Tryptophan--tRNA ligase, cytoplasmic (wrs1), found in Schizosaccharomyces pombe (strain 972 / ATCC 24843) (Fission yeast).